The following is a 376-amino-acid chain: UDP-N-acetylglucosamine 2-epimerase (376 aa).

Residues arginine 10, lysine 15, aspartate 95, glutamate 117, histidine 213, glutamine 271, phenylalanine 276, 290–292, glutamate 296, and arginine 313 each bind substrate; that span reads SGG.

It belongs to the UDP-N-acetylglucosamine 2-epimerase family. In terms of assembly, homodimer.

The protein resides in the cytoplasm. It catalyses the reaction UDP-N-acetyl-alpha-D-glucosamine = UDP-N-acetyl-alpha-D-mannosamine. It participates in bacterial outer membrane biogenesis; enterobacterial common antigen biosynthesis. Catalyzes the reversible epimerization at C-2 of UDP-N-acetylglucosamine (UDP-GlcNAc) and thereby provides bacteria with UDP-N-acetylmannosamine (UDP-ManNAc), the activated donor of ManNAc residues. The sequence is that of UDP-N-acetylglucosamine 2-epimerase from Escherichia coli O157:H7.